We begin with the raw amino-acid sequence, 706 residues long: Lethal(3)malignant brain tumor-like protein 2 (706 aa).

The tract at residues 1–85 (MEKPRGVEET…GTPRSLDGSG (85 aa)) is disordered. Position 13 is a phosphoserine (S13). Positions 15–26 (PMEEEEEDDDLE) are enriched in acidic residues. The segment covering 39–50 (SSAGSESSSYLE) has biased composition (low complexity). A compositionally biased stretch (basic and acidic residues) spans 54-63 (EAEHEDREAG). S68 is subject to Phosphoserine. T77 is subject to Phosphothreonine. The segment at 82–117 (DGSGSEPAVCEMCGIVGTREAFFSKTKRFCSVSCSR) adopts an FCS-type zinc-finger fold. Zn(2+)-binding residues include C91, C94, C111, and C115. MBT repeat units lie at residues 180–284 (FDWG…LVPP), 292–392 (TDWK…IKLS), 398–501 (MAHH…LTPP), and 509–605 (FSWE…LQPP). Phosphoserine is present on S339. K406 is covalently cross-linked (Glycyl lysine isopeptide (Lys-Gly) (interchain with G-Cter in SUMO2)). The segment at 606–669 (VATEPTTPLK…KAPSEPAPDE (64 aa)) is disordered. A compositionally biased stretch (basic residues) spans 620–635 (TKKKKKQFGKKRKRIP). Glycyl lysine isopeptide (Lys-Gly) (interchain with G-Cter in SUMO2) cross-links involve residues K648, K660, and K676. Positions 685-706 (ADKALSPELPVPVENIKQETDD) are disordered. Position 690 is a phosphoserine (S690). A Glycyl lysine isopeptide (Lys-Gly) (interchain with G-Cter in SUMO1); alternate cross-link involves residue K701. A Glycyl lysine isopeptide (Lys-Gly) (interchain with G-Cter in SUMO2); alternate cross-link involves residue K701.

In terms of assembly, part of the E2F6.com-1 complex in G0 phase composed of E2F6, MGA, MAX, TFDP1, CBX3, BAT8, EUHMTASE1, RING1, RNF2, MBLR, BAT8 and YAF2.

The protein resides in the nucleus. Putative Polycomb group (PcG) protein. PcG proteins maintain the transcriptionally repressive state of genes, probably via a modification of chromatin, rendering it heritably changed in its expressibility. Its association with a chromatin-remodeling complex suggests that it may contribute to prevent expression of genes that trigger the cell into mitosis. Binds to monomethylated and dimethylated 'Lys-20' on histone H4. Binds histone H3 peptides that are monomethylated or dimethylated on 'Lys-4', 'Lys-9' or 'Lys-27'. This is Lethal(3)malignant brain tumor-like protein 2 (L3MBTL2) from Bos taurus (Bovine).